The following is a 71-amino-acid chain: Ribosome modulation factor (71 aa).

Belongs to the ribosome modulation factor family.

The protein resides in the cytoplasm. During stationary phase, converts 70S ribosomes to an inactive dimeric form (100S ribosomes). This Pseudomonas savastanoi pv. phaseolicola (strain 1448A / Race 6) (Pseudomonas syringae pv. phaseolicola (strain 1448A / Race 6)) protein is Ribosome modulation factor.